The following is a 503-amino-acid chain: Cytochrome P450 monooxygenase ecdH (503 aa).

Residues threonine 8–leucine 24 traverse the membrane as a helical segment. N-linked (GlcNAc...) asparagine glycans are attached at residues asparagine 64, asparagine 324, and asparagine 413. Position 449 (cysteine 449) interacts with heme.

Belongs to the cytochrome P450 family. The cofactor is heme.

Its subcellular location is the membrane. Its pathway is antifungal biosynthesis. In terms of biological role, cytochrome P450 monooxygenase; part of the gene cluster that mediates the biosynthesis of echinocandin B, a fungal lipidated cyclic hexapeptide that acts as an antifungal agent. Linoleoyl-AMP, produced by the fatty-acyl-AMP ligase ecdI, is transferred to the initiation carrier domain (T0) of ecdA. The linoleoyl-S-phosphopantetheinyl-T0 is sequentially extended with L-ornithine, L-threonine, L-proline, L-homotyrosine, L-threonine, and 4R-methyl-L-proline to form the linear hexapeptide. Thereafter, the terminal condensation (C7) performs macrocyclization of the NRPS product and the cyclic scaffold is released from ecdA. All six of the amino acid residues are hydroxylated, including 4R,5R-dihydroxy-L-ornithine, 4R-hydroxyl-L-proline, 3S,4S-dihydroxy-L-homotyrosine, and 3S-hydroxyl-4S-methyl-L-prolin. In the pathway, all the hydroxylation reactions are proposed to occur following completion of the cyclic peptide, so the unhydroxylated precursor produced by ecdA will undergo six rounds of hydroxylation. Five hydroxylase genes (ecdG, ecdH, ecdK, htyE and htyF) are embedded within the echinocandin B (ecd) and L-homotyrosine (hty) clusters. This is Cytochrome P450 monooxygenase ecdH from Aspergillus rugulosus (Emericella rugulosa).